A 73-amino-acid polypeptide reads, in one-letter code: Excelsatoxin A (73 aa).

An N-terminal signal peptide occupies residues 1-20; that stretch reads MRFALVAAITIALLVAGSVA. The propeptide occupies 21–37; it reads DESSEDIDNIVIKTPLD. 3 disulfides stabilise this stretch: Cys-41-Cys-58, Cys-46-Cys-60, and Cys-54-Cys-69.

It belongs to the gympietide family. In terms of tissue distribution, expressed in trichomes, that are stiff epidermal hairs located on the surface of petioles and leaves. Not expressed in other aerial parts.

Its subcellular location is the secreted. Functionally, neurotoxin certainly responsible for the defensive, persistent, and painful stings of the giant stinging tree. Inhibits inactivation of Nav1.7/SCN9A sodium channel in sensory neurons by directly interacting with TMEM233, a newly described Nav-interacting protein. Has virtually no effect on Nav1.7/SCN9A function in heterologous expression systems and in neurons that do not express TMEM233. Also weakly but significantly affects Nav1.8/SCN10A. Coexpression of TMEM233 with Nav also confers ExTxA sensitivity to Nav1.1-Nav1.6. On the Nav1.7/SCN9A channel, causes a significant hyperpolarizing shift in the voltage dependence of activation. Its effects on Nav currents are irreversible, with no apparent reduction in activity even after repeated wash steps over 30 minutes. Does not show activity on Nav1.9/SCN11A. Does not show insecticidal activities. In vivo, induces nocifensive behavior in mice (licking or biting and shaking or lifting of the affected paw) lasting for approximately 1 hour. This is Excelsatoxin A from Dendrocnide excelsa (Giant stinging tree).